Consider the following 146-residue polypeptide: VHLTGEEKSAVTALWGKVNVDDVGGEALGRLLVVYPWTQRFFESFGDLSSPSAVMGNPKVKAHGKKVLSAFSDGLNHLDNLKGTFAKLSELHCDKLHVDPENFRLLGNVLVVVLAHHFGKDFTPQVQSAYQKVVAGVANALAHKYH.

An N-acetylvaline modification is found at V1. The Globin domain maps to 2–146; the sequence is HLTGEEKSAV…VANALAHKYH (145 aa). A Phosphothreonine modification is found at T12. A Phosphoserine modification is found at S44. Residue K59 is modified to N6-acetyllysine. H63 provides a ligand contact to heme b. Position 82 is an N6-acetyllysine (K82). H92 is a binding site for heme b. C93 is modified (S-nitrosocysteine). K144 bears the N6-acetyllysine mark.

The protein belongs to the globin family. In terms of assembly, heterotetramer of two alpha chains and two beta chains. Red blood cells.

Functionally, involved in oxygen transport from the lung to the various peripheral tissues. In Nycticebus coucang (Slow loris), this protein is Hemoglobin subunit beta (HBB).